Reading from the N-terminus, the 92-residue chain is DNA/RNA-binding protein Alba (92 aa).

Lys-11 carries the N6-acetyllysine modification.

This sequence belongs to the histone-like Alba family. In terms of processing, acetylated. Acetylation at Lys-11 decreases DNA-binding affinity.

It localises to the cytoplasm. The protein resides in the chromosome. Its function is as follows. Binds double-stranded DNA tightly but without sequence specificity. Involved in DNA compaction. This Pyrobaculum calidifontis (strain DSM 21063 / JCM 11548 / VA1) protein is DNA/RNA-binding protein Alba.